The following is a 203-amino-acid chain: High frequency lysogenization protein HflD homolog (203 aa).

The protein belongs to the HflD family.

The protein resides in the cytoplasm. Its subcellular location is the cell inner membrane. The polypeptide is High frequency lysogenization protein HflD homolog (Vesicomyosocius okutanii subsp. Calyptogena okutanii (strain HA)).